Here is a 154-residue protein sequence, read N- to C-terminus: Egg-lysin (154 aa).

Residues 1–18 (MKLFVLCIFAMMATLAMS) form the signal peptide.

Homodimer. As to expression, sperm.

In terms of biological role, dissolves the egg vitelline layer nonenzymatically during fertilization. It creates a hole of about 3 mu-m in diameter through which the sperm pass. The sequence is that of Egg-lysin from Haliotis kamtschatkana (Pinto abalone).